Consider the following 92-residue polypeptide: YcgL domain-containing protein Sfri_1738 (92 aa).

Residues 1–85 enclose the YcgL domain; the sequence is MICAVYKSGR…PQINLLEQHK (85 aa).

This chain is YcgL domain-containing protein Sfri_1738, found in Shewanella frigidimarina (strain NCIMB 400).